The chain runs to 92 residues: Sec-independent protein translocase protein TatA (92 aa).

Residues 1–21 (MGIFDWKHWIVILVVVVLVFG) traverse the membrane as a helical segment. A disordered region spans residues 44–92 (NDDEKPADPVVNPVPPAQPVHPQATQPITERRTFDVQAEKVEEPTRKDS). Residues 72 to 92 (TERRTFDVQAEKVEEPTRKDS) are compositionally biased toward basic and acidic residues.

This sequence belongs to the TatA/E family. As to quaternary structure, the Tat system comprises two distinct complexes: a TatABC complex, containing multiple copies of TatA, TatB and TatC subunits, and a separate TatA complex, containing only TatA subunits. Substrates initially bind to the TatABC complex, which probably triggers association of the separate TatA complex to form the active translocon.

It localises to the cell inner membrane. Its function is as follows. Part of the twin-arginine translocation (Tat) system that transports large folded proteins containing a characteristic twin-arginine motif in their signal peptide across membranes. TatA could form the protein-conducting channel of the Tat system. The chain is Sec-independent protein translocase protein TatA from Pseudomonas fluorescens (strain SBW25).